A 387-amino-acid polypeptide reads, in one-letter code: Succinyl-diaminopimelate desuccinylase (387 aa).

H74 is a binding site for Zn(2+). The active site involves D76. D107 provides a ligand contact to Zn(2+). Residue E142 is the Proton acceptor of the active site. Zn(2+) contacts are provided by E143, E171, and H360.

The protein belongs to the peptidase M20A family. DapE subfamily. Homodimer. Zn(2+) is required as a cofactor. The cofactor is Co(2+).

The catalysed reaction is N-succinyl-(2S,6S)-2,6-diaminopimelate + H2O = (2S,6S)-2,6-diaminopimelate + succinate. The protein operates within amino-acid biosynthesis; L-lysine biosynthesis via DAP pathway; LL-2,6-diaminopimelate from (S)-tetrahydrodipicolinate (succinylase route): step 3/3. Its function is as follows. Catalyzes the hydrolysis of N-succinyl-L,L-diaminopimelic acid (SDAP), forming succinate and LL-2,6-diaminopimelate (DAP), an intermediate involved in the bacterial biosynthesis of lysine and meso-diaminopimelic acid, an essential component of bacterial cell walls. The protein is Succinyl-diaminopimelate desuccinylase of Rhodopseudomonas palustris (strain BisA53).